Here is a 439-residue protein sequence, read N- to C-terminus: Glutamate-1-semialdehyde 2,1-aminomutase (439 aa).

Lys-279 carries the post-translational modification N6-(pyridoxal phosphate)lysine.

The protein belongs to the class-III pyridoxal-phosphate-dependent aminotransferase family. HemL subfamily. As to quaternary structure, homodimer. It depends on pyridoxal 5'-phosphate as a cofactor.

It localises to the cytoplasm. The enzyme catalyses (S)-4-amino-5-oxopentanoate = 5-aminolevulinate. Its pathway is porphyrin-containing compound metabolism; protoporphyrin-IX biosynthesis; 5-aminolevulinate from L-glutamyl-tRNA(Glu): step 2/2. This Rhodopirellula baltica (strain DSM 10527 / NCIMB 13988 / SH1) protein is Glutamate-1-semialdehyde 2,1-aminomutase.